The chain runs to 54 residues: UPF0391 membrane protein Rfer_1875 (54 aa).

2 helical membrane-spanning segments follow: residues 5 to 25 and 30 to 50; these read AVVFFVIALIAALFGFGGIAA and IGKILFIVFAILAVASFLFGL.

This sequence belongs to the UPF0391 family.

It localises to the cell membrane. The polypeptide is UPF0391 membrane protein Rfer_1875 (Albidiferax ferrireducens (strain ATCC BAA-621 / DSM 15236 / T118) (Rhodoferax ferrireducens)).